Reading from the N-terminus, the 71-residue chain is Large ribosomal subunit protein bL31 (71 aa).

The Zn(2+) site is built by Cys16, Cys18, Cys38, and Cys41.

The protein belongs to the bacterial ribosomal protein bL31 family. Type A subfamily. As to quaternary structure, part of the 50S ribosomal subunit. Zn(2+) is required as a cofactor.

Binds the 23S rRNA. This Francisella tularensis subsp. mediasiatica (strain FSC147) protein is Large ribosomal subunit protein bL31.